A 481-amino-acid chain; its full sequence is tRNA:m(4)X modification enzyme TRM13 homolog (481 aa).

Ala-2 carries the post-translational modification N-acetylalanine. The segment at Arg-56–Glu-83 adopts a CHHC U11-48K-type zinc-finger fold. The Zn(2+) site is built by Cys-59, His-65, His-75, and Cys-79. A coiled-coil region spans residues Ser-113–His-140. The segment at Glu-381–Thr-408 is disordered.

Belongs to the methyltransferase TRM13 family.

The enzyme catalyses cytidine(4) in tRNA(Pro) + S-adenosyl-L-methionine = 2'-O-methylcytidine(4) in tRNA(Pro) + S-adenosyl-L-homocysteine + H(+). It catalyses the reaction cytidine(4) in tRNA(Gly)(GCC) + S-adenosyl-L-methionine = 2'-O-methylcytidine(4) in tRNA(Gly)(GCC) + S-adenosyl-L-homocysteine + H(+). It carries out the reaction adenosine(4) in tRNA(His) + S-adenosyl-L-methionine = 2'-O-methyladenosine(4) in tRNA(His) + S-adenosyl-L-homocysteine + H(+). TRNA methylase which 2'-O-methylates cytidine(4) in tRNA(Pro) and tRNA(Gly)(GCC), and adenosine(4) in tRNA(His). This chain is tRNA:m(4)X modification enzyme TRM13 homolog (TRMT13), found in Homo sapiens (Human).